The primary structure comprises 487 residues: Serine/threonine-protein kinase 4 (487 aa).

Position 1 is an N-acetylmethionine (methionine 1). The residue at position 3 (threonine 3) is a Phosphothreonine. The Protein kinase domain occupies 30 to 281 (FDVLEKLGEG…ATQLLQHPFV (252 aa)). ATP-binding positions include 36 to 44 (LGEGSYGSV) and lysine 59. Aspartate 149 acts as the Proton acceptor in catalysis. Threonine 183 carries the post-translational modification Phosphothreonine; by autocatalysis. Serine 265 bears the Phosphoserine mark. Residues 290 to 310 (LRDLINEAMDVKLKRQESQQR) are a coiled coil. The span at 303-312 (KRQESQQREV) shows a compositional bias: basic and acidic residues. The tract at residues 303–332 (KRQESQQREVDQDDEENSEEDEMDSGTMVR) is disordered. Over residues 313–326 (DQDDEENSEEDEMD) the composition is skewed to acidic residues. Residue serine 320 is modified to Phosphoserine. Phosphothreonine occurs at positions 340 and 367. Threonine 387 bears the Phosphothreonine; by PKB/AKT1 mark. Serine 410 and serine 414 each carry phosphoserine. At tyrosine 433 the chain carries Phosphotyrosine. The SARAH domain maps to 433–480 (YEFLKSWTVEDLQKRLLALDPMMEQEIEEIRQKYQSKRQPILDAIEAK).

The protein belongs to the protein kinase superfamily. STE Ser/Thr protein kinase family. STE20 subfamily. Homodimer; mediated via the coiled-coil region. Interacts with NORE1, which inhibits autoactivation. Interacts with and stabilizes SAV1. Interacts with RASSF1. Interacts with FOXO3. Interacts with RASSF2 (via SARAH domain). Interacts with AR, PKB/AKT1, TNNI3 and SIRT1. Interacts with DLG5 (via PDZ domain 3). Interacts with MARK3 and SCRIB in the presence of DLG5. It depends on Mg(2+) as a cofactor. Post-translationally, autophosphorylated on serine and threonine residues. Phosphorylation at Thr-387 by PKB/AKT1, leads to inhibition of its: kinase activity, nuclear translocation and autophosphorylation at Thr-183. It also diminishes its cleavage by caspases and its ability to phosphorylate FOXO3. In terms of processing, proteolytically cleaved by caspase-3 during apoptosis at Asp-326 and Asp-349 resulting in a 37 kDa or a 39 kDa subunit respectively. The 39 kDa subunit is further cleaved into the 37 kDa form. Proteolytic cleavage results in kinase activation and nuclear translocation of the truncated form (MST1/N). It is less likely that cleavage at Asp-349 is a prerequisite for activation as this site is not conserved in the murine ortholog.

The protein localises to the cytoplasm. It localises to the nucleus. The enzyme catalyses L-seryl-[protein] + ATP = O-phospho-L-seryl-[protein] + ADP + H(+). The catalysed reaction is L-threonyl-[protein] + ATP = O-phospho-L-threonyl-[protein] + ADP + H(+). Its activity is regulated as follows. Inhibited by the C-terminal non-catalytic region. Activated by caspase-cleavage. Full activation also requires homodimerization and autophosphorylation of Thr-183. Activated by RASSF1 which acts by preventing its dephosphorylation. Stress-activated, pro-apoptotic kinase which, following caspase-cleavage, enters the nucleus and induces chromatin condensation followed by internucleosomal DNA fragmentation. Key component of the Hippo signaling pathway which plays a pivotal role in organ size control and tumor suppression by restricting proliferation and promoting apoptosis. The core of this pathway is composed of a kinase cascade wherein STK3/MST2 and STK4/MST1, in complex with its regulatory protein SAV1, phosphorylates and activates LATS1/2 in complex with its regulatory protein MOB1, which in turn phosphorylates and inactivates YAP1 oncoprotein and WWTR1/TAZ. Phosphorylation of YAP1 by LATS2 inhibits its translocation into the nucleus to regulate cellular genes important for cell proliferation, cell death, and cell migration. STK3/MST2 and STK4/MST1 are required to repress proliferation of mature hepatocytes, to prevent activation of facultative adult liver stem cells (oval cells), and to inhibit tumor formation. Phosphorylates 'Ser-14' of histone H2B (H2BS14ph) during apoptosis. Phosphorylates FOXO3 upon oxidative stress, which results in its nuclear translocation and cell death initiation. Phosphorylates MOBKL1A, MOBKL1B and RASSF2. Phosphorylates TNNI3 (cardiac Tn-I) and alters its binding affinity to TNNC1 (cardiac Tn-C) and TNNT2 (cardiac Tn-T). Phosphorylates FOXO1 on 'Ser-212' and regulates its activation and stimulates transcription of PMAIP1 in a FOXO1-dependent manner. Phosphorylates SIRT1 and inhibits SIRT1-mediated p53/TP53 deacetylation, thereby promoting p53/TP53 dependent transcription and apoptosis upon DNA damage. Acts as an inhibitor of PKB/AKT1. Phosphorylates AR on 'Ser-650' and suppresses its activity by intersecting with PKB/AKT1 signaling and antagonizing formation of AR-chromatin complexes. The protein is Serine/threonine-protein kinase 4 (STK4) of Colobus guereza (Mantled guereza).